We begin with the raw amino-acid sequence, 195 residues long: Cysteine/O-acetylserine efflux protein (195 aa).

Over 1–9 (MTPMLLSAF) the chain is Periplasmic. The chain crosses the membrane as a helical span at residues 10–32 (WTYTLITALTPGPNNILALSAAT). Residues 33-46 (AHGFRQSIRVLAGM) are Cytoplasmic-facing. A helical membrane pass occupies residues 47 to 67 (SLGFLVVMLLCAGIAFSLAVI). Over 68-69 (DP) the chain is Periplasmic. A helical membrane pass occupies residues 70–90 (AIIHLLSWVGAAYILWLAWKI). Topologically, residues 91–104 (ATSPAADEKVRPKP) are cytoplasmic. The helical transmembrane segment at 105 to 125 (VGFWVSFGLQFVNVKIILYGI) threads the bilayer. At 126–141 (TALSTFVLPQTQALNW) the chain is on the periplasmic side. A helical transmembrane segment spans residues 142-162 (VIGVSILLALIGTFGNVCWAL). Residues 163 to 176 (AGHLFQRAFRHYGR) are Cytoplasmic-facing. A helical membrane pass occupies residues 177 to 194 (QLNIILALLLVYCAVRIF). Position 195 (Tyr-195) is a topological domain, periplasmic.

It belongs to the Rht family.

It is found in the cell inner membrane. It catalyses the reaction O-acetyl-L-serine(in) = O-acetyl-L-serine(out). The enzyme catalyses L-cysteine(in) = L-cysteine(out). Exporter of O-acetylserine (OAS) and cysteine. This chain is Cysteine/O-acetylserine efflux protein (eamB), found in Salmonella paratyphi A (strain ATCC 9150 / SARB42).